Consider the following 256-residue polypeptide: Thiazole synthase (256 aa).

Lys95 acts as the Schiff-base intermediate with DXP in catalysis. Residues Gly156, 182-183, and 204-205 each bind 1-deoxy-D-xylulose 5-phosphate; these read AG and NT.

This sequence belongs to the ThiG family. Homotetramer. Forms heterodimers with either ThiH or ThiS.

It is found in the cytoplasm. The enzyme catalyses [ThiS sulfur-carrier protein]-C-terminal-Gly-aminoethanethioate + 2-iminoacetate + 1-deoxy-D-xylulose 5-phosphate = [ThiS sulfur-carrier protein]-C-terminal Gly-Gly + 2-[(2R,5Z)-2-carboxy-4-methylthiazol-5(2H)-ylidene]ethyl phosphate + 2 H2O + H(+). Its pathway is cofactor biosynthesis; thiamine diphosphate biosynthesis. Its function is as follows. Catalyzes the rearrangement of 1-deoxy-D-xylulose 5-phosphate (DXP) to produce the thiazole phosphate moiety of thiamine. Sulfur is provided by the thiocarboxylate moiety of the carrier protein ThiS. In vitro, sulfur can be provided by H(2)S. The sequence is that of Thiazole synthase from Escherichia coli O17:K52:H18 (strain UMN026 / ExPEC).